Consider the following 487-residue polypeptide: NADH-quinone oxidoreductase subunit N (487 aa).

13 consecutive transmembrane segments (helical) span residues 7–27 (LTLILPEIVMAISAMALILIT), 37–57 (LVSILAAATLGAAAVMVAPAL), 81–101 (FAKILIYLSAIGCLMIAPAFF), 112–132 (PVLVLLATLGMSIMVSAGDLI), 166–186 (FVLGALASGILLYGMSLVYGF), 207–227 (ALFGVIFVLAGLAFKIAAVPF), 237–257 (GAPTPVTTFFATAPKVAAVAL), 276–296 (IVIFAALASIVLGALGAIGQT), 307–327 (INNVGFILIGLAASTVAGLSA), 329–349 (LTYLAIYVVMALGSFVALLML), 373–393 (LAWCLLFLMFSLAGIPPLLGF), 407–427 (DMVLLAALGIAASVIGAFYYI), and 452–472 (VLLILAAVVVSPLGYLLTGWL).

The protein belongs to the complex I subunit 2 family. NDH-1 is composed of 14 different subunits. Subunits NuoA, H, J, K, L, M, N constitute the membrane sector of the complex.

The protein localises to the cell inner membrane. The enzyme catalyses a quinone + NADH + 5 H(+)(in) = a quinol + NAD(+) + 4 H(+)(out). In terms of biological role, NDH-1 shuttles electrons from NADH, via FMN and iron-sulfur (Fe-S) centers, to quinones in the respiratory chain. The immediate electron acceptor for the enzyme in this species is believed to be ubiquinone. Couples the redox reaction to proton translocation (for every two electrons transferred, four hydrogen ions are translocated across the cytoplasmic membrane), and thus conserves the redox energy in a proton gradient. This Erythrobacter litoralis (strain HTCC2594) protein is NADH-quinone oxidoreductase subunit N.